The primary structure comprises 416 residues: Meiotically up-regulated protein PB1A10.08 (416 aa).

It localises to the cytoplasm. Its function is as follows. May have a role in meiosis and sporulation. This Schizosaccharomyces pombe (strain 972 / ATCC 24843) (Fission yeast) protein is Meiotically up-regulated protein PB1A10.08.